A 1003-amino-acid chain; its full sequence is Cytosolic carboxypeptidase 3 (1003 aa).

The segment at 1-23 (MSEDSEKEDYSDRTISDEDESDE) is disordered. Residues 299-570 (YPYTYTNLQE…HFCDSLLDYC (272 aa)) form the Peptidase M14 domain. Zn(2+)-binding residues include H364, E367, and H460. E534 serves as the catalytic Proton donor/acceptor. 2 disordered regions span residues 642–662 (KQLK…NIRE) and 911–1003 (KSSE…QRDT). Over residues 649–662 (ERNSTIERHQNIRE) the composition is skewed to basic and acidic residues. The segment covering 922–934 (PKKRRKYSRVKAT) has biased composition (basic residues). A compositionally biased stretch (polar residues) spans 963–976 (AEGSSQQGTMQTAP).

This sequence belongs to the peptidase M14 family. Zn(2+) serves as cofactor.

The protein localises to the cytoplasm. It localises to the cytosol. The catalysed reaction is (L-glutamyl)(n+1)-gamma-L-glutamyl-L-glutamyl-[protein] + H2O = (L-glutamyl)(n)-gamma-L-glutamyl-L-glutamyl-[protein] + L-glutamate. Metallocarboxypeptidase that mediates deglutamylation of tubulin and non-tubulin target proteins. Catalyzes the removal of polyglutamate side chains present on the gamma-carboxyl group of glutamate residues within the C-terminal tail of tubulin protein. Specifically cleaves tubulin long-side-chains, while it is not able to remove the branching point glutamate. Also catalyzes the removal of polyglutamate residues from the carboxy-terminus of non-tubulin proteins such as MYLK. May catalyze the hydrolysis of aspartate from the carboxy-terminus of target proteins. Does not show detyrosinase or deglycylase activities from the carboxy-terminus of target proteins. The chain is Cytosolic carboxypeptidase 3 (AGBL3) from Bos taurus (Bovine).